Here is a 497-residue protein sequence, read N- to C-terminus: E3 ubiquitin-protein ligase CBL-C (497 aa).

Positions 7–145 are 4H; the sequence is PQGWQWGEPR…SALFPEGKYC (139 aa). The 315-residue stretch at 7 to 321 folds into the Cbl-PTB domain; sequence PQGWQWGEPR…GKNHNPDLTE (315 aa). Residues 146-218 form an EF-hand-like region; the sequence is GHLYQITKGS…FEFDIFTRLF (73 aa). Ca(2+)-binding residues include Asp-199, Thr-201, and Glu-210. The segment at 219 to 321 is SH2-like; the sequence is QPWPTLLKNW…GKNHNPDLTE (103 aa). Residue Arg-264 coordinates 4-O-phospho-L-tyrosine. The segment at 322–350 is linker; it reads LCRAVLNQCIQVSQEQLQLYQAMNSTFEL. Tyr-341 carries the post-translational modification Phosphotyrosine; by SRC. The RING-type zinc-finger motif lies at 351–390; the sequence is CKICTERDKDVRIEPCGHLLCSCCLAAWQHSDSQTCPFCR. Positions 351–497 are interaction with RET; sequence CKICTERDKD…QVREGATESS (147 aa).

In terms of assembly, interacts with Ubiquitin-conjugating enzyme E2 UBE2D2 and UBE2D3. Interacts with EGFR (tyrosine phosphorylated). Interacts with the SH3 domain proteins LYN and CRK. Interacts (via RING-type zinc finger) with TGFB1I1 (via LIM zinc-binding domain 2); the interaction is direct and enhances the E3 activity. Interacts directly with RET (inactive) and CD2AP; dissociates from RET upon RET activation by GDNF which also increases the interaction with CD2AP suggesting dissociation as CBLC:CD2AP complex. Interacts with SRC; the interaction is enhanced when SRC is phosphorylated at 'Tyr-419'. Phosphorylated on multiple tyrosine residues by SRC. In terms of processing, autoubiquitinated, when phosphorylated at Tyr-341.

It catalyses the reaction S-ubiquitinyl-[E2 ubiquitin-conjugating enzyme]-L-cysteine + [acceptor protein]-L-lysine = [E2 ubiquitin-conjugating enzyme]-L-cysteine + N(6)-ubiquitinyl-[acceptor protein]-L-lysine.. Phosphorylation at Tyr-341 is necessary and sufficient for the activation of E3 activity. In terms of biological role, acts as an E3 ubiquitin-protein ligase, which accepts ubiquitin from specific E2 ubiquitin-conjugating enzymes, and then transfers it to substrates promoting their degradation by the proteasome. Functionally coupled with the E2 ubiquitin-protein ligases UB2D1, UB2D2 and UB2D3. Regulator of EGFR mediated signal transduction; upon EGF activation, ubiquitinates EGFR. Inhibits EGF stimulated MAPK1 activation. Promotes ubiquitination of SRC phosphorylated at 'Tyr-419', has the highest ubiquitin ligase activity among CBL family proteins. In collaboration with CD2AP may act as regulatory checkpoint for Ret signaling by modulating the rate of RET degradation after ligand activation; CD2AP converts it from an inhibitor to a promoter of RET degradation; the function limits the potency of GDNF on neuronal survival. The chain is E3 ubiquitin-protein ligase CBL-C (Cblc) from Rattus norvegicus (Rat).